Here is a 448-residue protein sequence, read N- to C-terminus: uncharacterized protein (448 aa).

The residue at position 280 (Lys280) is an N6-(pyridoxal phosphate)lysine.

The protein belongs to the class-III pyridoxal-phosphate-dependent aminotransferase family.

It is found in the cytoplasm. It localises to the mitochondrion. This is an uncharacterized protein from Schizosaccharomyces pombe (strain 972 / ATCC 24843) (Fission yeast).